The chain runs to 359 residues: Membrane-bound lytic murein transglycosylase C (359 aa).

The signal sequence occupies residues 1-16 (MKKYLALALIAPLLIS). C17 carries the N-palmitoyl cysteine lipid modification. C17 carries S-diacylglycerol cysteine lipidation.

It belongs to the transglycosylase Slt family.

It is found in the cell outer membrane. It carries out the reaction Exolytic cleavage of the (1-&gt;4)-beta-glycosidic linkage between N-acetylmuramic acid (MurNAc) and N-acetylglucosamine (GlcNAc) residues in peptidoglycan, from either the reducing or the non-reducing ends of the peptidoglycan chains, with concomitant formation of a 1,6-anhydrobond in the MurNAc residue.. Murein-degrading enzyme. May play a role in recycling of muropeptides during cell elongation and/or cell division. The sequence is that of Membrane-bound lytic murein transglycosylase C from Escherichia coli O7:K1 (strain IAI39 / ExPEC).